The primary structure comprises 240 residues: MTKRWFITGTDTDVGKTVASCALLQAATAQGYRTAGYKPVASGSQMTADGLRNSDALALQANSSQRLGYSQVNPFTFLEATSPHIASESEGRAIPLTALSQGLRQLEPSADWILIEGAGGWFTPLSPQATFADWVQQEQLPVIMVVGVKLGCINHALLTAQAIQHAGLTLAGWVANEVTPAGRRQAEYQATLTRMITAPLLGIIPYLSDIEENPVTTRRDLGHYLDLTVLRAAEREAVNM.

13–18 (DVGKTV) contacts ATP. Threonine 17 provides a ligand contact to Mg(2+). The active site involves lysine 38. Serine 42 serves as a coordination point for substrate. Residues aspartate 55, 116 to 119 (EGAG), 176 to 177 (NE), 205 to 207 (PYL), and glutamate 212 each bind ATP. Positions 55 and 116 each coordinate Mg(2+).

Belongs to the dethiobiotin synthetase family. In terms of assembly, homodimer. The cofactor is Mg(2+).

Its subcellular location is the cytoplasm. It catalyses the reaction (7R,8S)-7,8-diammoniononanoate + CO2 + ATP = (4R,5S)-dethiobiotin + ADP + phosphate + 3 H(+). It participates in cofactor biosynthesis; biotin biosynthesis; biotin from 7,8-diaminononanoate: step 1/2. In terms of biological role, catalyzes a mechanistically unusual reaction, the ATP-dependent insertion of CO2 between the N7 and N8 nitrogen atoms of 7,8-diaminopelargonic acid (DAPA, also called 7,8-diammoniononanoate) to form a ureido ring. The sequence is that of ATP-dependent dethiobiotin synthetase BioD 1 from Yersinia pestis.